Consider the following 615-residue polypeptide: UvrABC system protein C (615 aa).

In terms of domain architecture, GIY-YIG spans 14–91; that stretch reads TSPGCYIHKD…IKENKPKYNI (78 aa). Positions 196-231 constitute a UVR domain; the sequence is NKIIDELKGKMAAAAQTMEFERAAEYRDLIQAIGTL.

Belongs to the UvrC family. As to quaternary structure, interacts with UvrB in an incision complex.

The protein resides in the cytoplasm. Functionally, the UvrABC repair system catalyzes the recognition and processing of DNA lesions. UvrC both incises the 5' and 3' sides of the lesion. The N-terminal half is responsible for the 3' incision and the C-terminal half is responsible for the 5' incision. The sequence is that of UvrABC system protein C from Streptococcus pneumoniae serotype 19F (strain G54).